We begin with the raw amino-acid sequence, 424 residues long: Interferon regulatory factor 8 (424 aa).

Positions 7–114 form a DNA-binding region, IRF tryptophan pentad repeat; it reads GRRLRQWLIE…EPYKVYRIVP (108 aa).

It belongs to the IRF family. Interacts with COPS2. Interacts (via C-terminus) with TRIM21 (via C-terminus). Interacts with the BATF-JUNB heterodimer. Interacts with BATF (via bZIP domain); the interaction is direct. Interacts with SPI1. Post-translationally, ubiquitinated. Ubiquitination by TRIM21 in macrophages, a process that is strongly increased upon interferon gamma stimulation, leds to the enhanced transcriptional activity of target cytokine genes. Ubiquitination leads to its degradation by the proteasome. In terms of processing, sumoylated with SUMO3. Desumoylated by SENP1. In terms of tissue distribution, expressed in bone marrow macrophages (at protein level). Mainly expressed in lymphoid tissues. Predominantly expressed in CD8(+)-expressing dendritic cells.

Its subcellular location is the nucleus. It is found in the cytoplasm. In terms of biological role, transcription factor that specifically binds to the upstream regulatory region of type I interferon (IFN) and IFN-inducible MHC class I genes (the interferon consensus sequence (ICS)). Can both act as a transcriptional activator or repressor. Plays a negative regulatory role in cells of the immune system. Involved in CD8(+) dendritic cell differentiation by forming a complex with the BATF-JUNB heterodimer in immune cells, leading to recognition of AICE sequence (5'-TGAnTCA/GAAA-3'), an immune-specific regulatory element, followed by cooperative binding of BATF and IRF8 and activation of genes. Required for the development of plasmacytoid dendritic cells (pDCs), which produce most of the type I IFN in response to viral infection. Positively regulates macroautophagy in dendritic cells. Acts as a transcriptional repressor of osteoclast differentiation factors such as NFATC1 and EEIG1. This is Interferon regulatory factor 8 from Mus musculus (Mouse).